Reading from the N-terminus, the 369-residue chain is Anhydro-N-acetylmuramic acid kinase (369 aa).

12 to 19 (GTSMDGVD) serves as a coordination point for ATP.

It belongs to the anhydro-N-acetylmuramic acid kinase family.

It catalyses the reaction 1,6-anhydro-N-acetyl-beta-muramate + ATP + H2O = N-acetyl-D-muramate 6-phosphate + ADP + H(+). It participates in amino-sugar metabolism; 1,6-anhydro-N-acetylmuramate degradation. It functions in the pathway cell wall biogenesis; peptidoglycan recycling. Functionally, catalyzes the specific phosphorylation of 1,6-anhydro-N-acetylmuramic acid (anhMurNAc) with the simultaneous cleavage of the 1,6-anhydro ring, generating MurNAc-6-P. Is required for the utilization of anhMurNAc either imported from the medium or derived from its own cell wall murein, and thus plays a role in cell wall recycling. The protein is Anhydro-N-acetylmuramic acid kinase of Shewanella loihica (strain ATCC BAA-1088 / PV-4).